The chain runs to 216 residues: Guanylate kinase (216 aa).

One can recognise a Guanylate kinase-like domain in the interval 11-189 (GVLIVISGPS…AVKKIEAILL (179 aa)). 18–25 (GPSGAGKG) lines the ATP pocket.

This sequence belongs to the guanylate kinase family.

It localises to the cytoplasm. The catalysed reaction is GMP + ATP = GDP + ADP. Essential for recycling GMP and indirectly, cGMP. This Clostridium perfringens (strain ATCC 13124 / DSM 756 / JCM 1290 / NCIMB 6125 / NCTC 8237 / Type A) protein is Guanylate kinase.